We begin with the raw amino-acid sequence, 341 residues long: Killer cell immunoglobulin-like receptor 2DL3 (341 aa).

A signal peptide spans 1 to 21 (MSLMVVSMVCVGFFLLQGAWP). Over 22–245 (HEGVHRKPSL…SETGNPRHLH (224 aa)) the chain is Extracellular. Ig-like C2-type domains are found at residues 42 to 107 (EETV…VTHS) and 142 to 205 (GESV…FRDS). 2 cysteine pairs are disulfide-bonded: Cys-49–Cys-100 and Cys-149–Cys-198. N-linked (GlcNAc...) asparagine glycosylation is found at Asn-84, Asn-178, and Asn-211. Residues 220-239 (VTGNPSNSWPSPTEPSSETG) form a disordered region. Low complexity predominate over residues 223–239 (NPSNSWPSPTEPSSETG). Residues 246–265 (VLIGTSVVIILFILLLFFLL) traverse the membrane as a helical segment. The Cytoplasmic segment spans residues 266–341 (HRWCCNKKNA…VYTELPNAEP (76 aa)).

Belongs to the immunoglobulin superfamily. Interacts with ARRB2.

It is found in the cell membrane. Receptor on natural killer (NK) cells for HLA-C alleles (HLA-Cw1, HLA-Cw3 and HLA-Cw7). Inhibits the activity of NK cells thus preventing cell lysis. This chain is Killer cell immunoglobulin-like receptor 2DL3, found in Homo sapiens (Human).